Reading from the N-terminus, the 374-residue chain is N5-carboxyaminoimidazole ribonucleotide synthase (374 aa).

Residues Arg108, Lys148, 153-159 (GYDGKGQ), 183-186 (EQFL), Glu191, His214, and 266-267 (NE) each bind ATP. The ATP-grasp domain maps to 112–296 (KQTLQKAGSK…QFDTHILAVT (185 aa)).

The protein belongs to the PurK/PurT family. Homodimer.

The catalysed reaction is 5-amino-1-(5-phospho-beta-D-ribosyl)imidazole + hydrogencarbonate + ATP = 5-carboxyamino-1-(5-phospho-D-ribosyl)imidazole + ADP + phosphate + 2 H(+). It participates in purine metabolism; IMP biosynthesis via de novo pathway; 5-amino-1-(5-phospho-D-ribosyl)imidazole-4-carboxylate from 5-amino-1-(5-phospho-D-ribosyl)imidazole (N5-CAIR route): step 1/2. Its function is as follows. Catalyzes the ATP-dependent conversion of 5-aminoimidazole ribonucleotide (AIR) and HCO(3)(-) to N5-carboxyaminoimidazole ribonucleotide (N5-CAIR). The sequence is that of N5-carboxyaminoimidazole ribonucleotide synthase from Staphylococcus haemolyticus (strain JCSC1435).